Here is a 77-residue protein sequence, read N- to C-terminus: Structural DNA-binding protein p10 (77 aa).

A compositionally biased stretch (polar residues) spans 1-12; sequence MPTKAGTKSTAN. The tract at residues 1-38 is disordered; the sequence is MPTKAGTKSTANKKTTKGPSKSGSAKGHTGKTHATALH. Residues 17 to 27 are compositionally biased toward low complexity; it reads KGPSKSGSAKG.

This sequence belongs to the asfivirus P10 family.

Its subcellular location is the virion. In terms of biological role, may play a role in genome packaging through direct interaction with viral DNA. Binds to ssDNA and dsDNA with the same apparent affinity in vitro. The protein is Structural DNA-binding protein p10 of Ornithodoros (relapsing fever ticks).